Reading from the N-terminus, the 404-residue chain is Schlafen-like protein 1 (404 aa).

Disordered stretches follow at residues 1–31 and 139–170; these read MTPMKRSVQTQVSEPFTESWGEESLPELPTE and GPLSHREEEEEDSGLSPGPNPGSGVPLPAWPT. The span at 7–16 shows a compositional bias: polar residues; it reads SVQTQVSEPF. Residues 152 to 165 show a composition bias toward low complexity; the sequence is GLSPGPNPGSGVPL. An ATP-binding site is contributed by 258-265; it reads GVEDSGLV. Residues 365–395 are a coiled coil; it reads RWLVELGKLEERVKVLTMEKEQLQQQLQQHG.

Belongs to the Schlafen family. Subgroup I subfamily.

The polypeptide is Schlafen-like protein 1 (SLFNL1) (Macaca fascicularis (Crab-eating macaque)).